A 362-amino-acid chain; its full sequence is 3-dehydroquinate synthase (362 aa).

Residues 71–76 (DGEQYK), 105–109 (GVVGD), 129–130 (TT), Lys142, Lys151, and 169–172 (CLKT) each bind NAD(+). The Zn(2+) site is built by Glu184, His247, and His264.

This sequence belongs to the sugar phosphate cyclases superfamily. Dehydroquinate synthase family. It depends on NAD(+) as a cofactor. The cofactor is Co(2+). Requires Zn(2+) as cofactor.

It localises to the cytoplasm. It catalyses the reaction 7-phospho-2-dehydro-3-deoxy-D-arabino-heptonate = 3-dehydroquinate + phosphate. The protein operates within metabolic intermediate biosynthesis; chorismate biosynthesis; chorismate from D-erythrose 4-phosphate and phosphoenolpyruvate: step 2/7. In terms of biological role, catalyzes the conversion of 3-deoxy-D-arabino-heptulosonate 7-phosphate (DAHP) to dehydroquinate (DHQ). The protein is 3-dehydroquinate synthase of Escherichia coli O157:H7.